The sequence spans 300 residues: Homoserine kinase (300 aa).

87–97 contacts ATP; sequence PISRGLGSSSA.

The protein belongs to the GHMP kinase family. Homoserine kinase subfamily.

It is found in the cytoplasm. It carries out the reaction L-homoserine + ATP = O-phospho-L-homoserine + ADP + H(+). The protein operates within amino-acid biosynthesis; L-threonine biosynthesis; L-threonine from L-aspartate: step 4/5. In terms of biological role, catalyzes the ATP-dependent phosphorylation of L-homoserine to L-homoserine phosphate. The protein is Homoserine kinase of Clostridium kluyveri (strain ATCC 8527 / DSM 555 / NBRC 12016 / NCIMB 10680 / K1).